Reading from the N-terminus, the 149-residue chain is D-aminoacyl-tRNA deacylase (149 aa).

A Gly-cisPro motif, important for rejection of L-amino acids motif is present at residues 137–138; that stretch reads GP.

This sequence belongs to the DTD family. In terms of assembly, homodimer.

The protein resides in the cytoplasm. The catalysed reaction is glycyl-tRNA(Ala) + H2O = tRNA(Ala) + glycine + H(+). It catalyses the reaction a D-aminoacyl-tRNA + H2O = a tRNA + a D-alpha-amino acid + H(+). In terms of biological role, an aminoacyl-tRNA editing enzyme that deacylates mischarged D-aminoacyl-tRNAs. Also deacylates mischarged glycyl-tRNA(Ala), protecting cells against glycine mischarging by AlaRS. Acts via tRNA-based rather than protein-based catalysis; rejects L-amino acids rather than detecting D-amino acids in the active site. By recycling D-aminoacyl-tRNA to D-amino acids and free tRNA molecules, this enzyme counteracts the toxicity associated with the formation of D-aminoacyl-tRNA entities in vivo and helps enforce protein L-homochirality. This is D-aminoacyl-tRNA deacylase from Thermosipho africanus (strain TCF52B).